We begin with the raw amino-acid sequence, 258 residues long: Spectinomycin 9-adenylyltransferase (258 aa).

It carries out the reaction spectinomycin + ATP = 9-O-adenylylspectinomycin + diphosphate. Its function is as follows. Mediates bacterial resistance to spectinomycin, is probably a spectinomycin 9-adenylyltransferase. The chain is Spectinomycin 9-adenylyltransferase from Campylobacter jejuni.